The following is a 236-amino-acid chain: 2,3,4,5-tetrahydropyridine-2,6-dicarboxylate N-acetyltransferase (236 aa).

The protein belongs to the transferase hexapeptide repeat family. DapH subfamily.

It carries out the reaction (S)-2,3,4,5-tetrahydrodipicolinate + acetyl-CoA + H2O = L-2-acetamido-6-oxoheptanedioate + CoA. The protein operates within amino-acid biosynthesis; L-lysine biosynthesis via DAP pathway; LL-2,6-diaminopimelate from (S)-tetrahydrodipicolinate (acetylase route): step 1/3. Catalyzes the transfer of an acetyl group from acetyl-CoA to tetrahydrodipicolinate. This Clostridium botulinum (strain Langeland / NCTC 10281 / Type F) protein is 2,3,4,5-tetrahydropyridine-2,6-dicarboxylate N-acetyltransferase.